The chain runs to 114 residues: Fluoride-specific ion channel FluC 1 (114 aa).

Transmembrane regions (helical) follow at residues 3 to 23, 30 to 50, 55 to 75, and 87 to 107; these read IDIK…GALF, IFIV…LNIL, LTLC…MSHL, and FLLN…LGHI. Residues Gly-63 and Thr-66 each coordinate Na(+).

Belongs to the fluoride channel Fluc/FEX (TC 1.A.43) family.

The protein localises to the cell inner membrane. The enzyme catalyses fluoride(in) = fluoride(out). Na(+) is not transported, but it plays an essential structural role and its presence is essential for fluoride channel function. Fluoride-specific ion channel. Important for reducing fluoride concentration in the cell, thus reducing its toxicity. This chain is Fluoride-specific ion channel FluC 1, found in Prochlorococcus marinus (strain NATL2A).